The chain runs to 90 residues: Small ribosomal subunit protein uS15 (90 aa).

It belongs to the universal ribosomal protein uS15 family. In terms of assembly, part of the 30S ribosomal subunit. Forms a bridge to the 50S subunit in the 70S ribosome, contacting the 23S rRNA.

Functionally, one of the primary rRNA binding proteins, it binds directly to 16S rRNA where it helps nucleate assembly of the platform of the 30S subunit by binding and bridging several RNA helices of the 16S rRNA. Forms an intersubunit bridge (bridge B4) with the 23S rRNA of the 50S subunit in the ribosome. The protein is Small ribosomal subunit protein uS15 of Helicobacter hepaticus (strain ATCC 51449 / 3B1).